The following is a 581-amino-acid chain: 2-hydroxyacyl-CoA lyase 1 (581 aa).

Residues Ser-4 and Ser-6 each carry the phosphoserine modification. Position 63 (Glu-63) interacts with thiamine diphosphate. Lys-354, Lys-361, and Lys-368 each carry N6-succinyllysine. Residues 404 to 487 are thiamine pyrophosphate binding; sequence TMDIGRTMLQ…IILLVVNNNG (84 aa). Positions 458 and 485 each coordinate Mg(2+). The short motif at 579 to 581 is the Microbody targeting signal element; the sequence is SNM.

This sequence belongs to the TPP enzyme family. As to quaternary structure, homotetramer. The cofactor is Mg(2+). Thiamine diphosphate is required as a cofactor. In terms of tissue distribution, predominanly expressed in liver.

It is found in the peroxisome. The enzyme catalyses a 2-hydroxy-3-methyl fatty acyl-CoA = a 2-methyl-branched fatty aldehyde + formyl-CoA. It carries out the reaction an (R)-2-hydroxy-long-chain-fatty acyl-CoA = a long-chain fatty aldehyde + formyl-CoA. The catalysed reaction is 2-hydroxy-3-methylhexadecanoyl-CoA = 2-methylpentadecanal + formyl-CoA. It catalyses the reaction 2-hydroxyoctadecanoyl-CoA = heptadecanal + formyl-CoA. The enzyme catalyses 2-hydroxyphytanoyl-CoA = 2,6,10,14-tetramethylpentadecanal + formyl-CoA. Its pathway is lipid metabolism; fatty acid metabolism. Peroxisomal 2-OH acyl-CoA lyase involved in the cleavage (C1 removal) reaction in the fatty acid alpha-oxydation in a thiamine pyrophosphate (TPP)-dependent manner. Involved in the degradation of 3-methyl-branched fatty acids like phytanic acid and the shortening of 2-hydroxy long-chain fatty acids. Plays a significant role in the biosynthesis of heptadecanal in the liver. In Mus musculus (Mouse), this protein is 2-hydroxyacyl-CoA lyase 1 (Hacl1).